The sequence spans 764 residues: Thyrotropin receptor (764 aa).

A signal peptide spans 1 to 20; it reads MRPPPLLHLALLLALPRSLG. The Extracellular portion of the chain corresponds to 21 to 413; that stretch reads GKGCPSPPCE…EFNPCEDIMG (393 aa). An intrachain disulfide couples Cys-31 to Cys-41. Asn-77 and Asn-99 each carry an N-linked (GlcNAc...) asparagine glycan. 6 LRR repeats span residues 125 to 149, 150 to 174, 176 to 199, 201 to 223, 225 to 248, and 250 to 271; these read LPLL…KVYS, TDVF…AFQG, CNET…AFNG, KLDA…AFGG, YSGP…GLEH, and KELI…SFLH. Asn-177 and Asn-198 each carry an N-linked (GlcNAc...) asparagine glycan. Asn-302 is a glycosylation site (N-linked (GlcNAc...) asparagine). The residue at position 385 (Tyr-385) is a Sulfotyrosine. The chain crosses the membrane as a helical span at residues 414 to 441; sequence YKFLRIVVWFVSLLALLGNVFVLIVLLT. Over 442–450 the chain is Cytoplasmic; the sequence is SHYKLTVPR. The chain crosses the membrane as a helical span at residues 451–473; the sequence is FLMCNLAFADFCMGMYLLLIASV. Residues 474 to 494 are Extracellular-facing; sequence DLYTHSEYYNHAIDWQTGPGC. Residues Cys-494 and Cys-569 are joined by a disulfide bond. Residues 495–517 traverse the membrane as a helical segment; that stretch reads NTAGFFTVFASELSVYTLTVITL. Residues 518–537 lie on the Cytoplasmic side of the membrane; sequence ERWYAITFAMRLDRKIRLRH. A helical transmembrane segment spans residues 538-560; that stretch reads AYAIMVGGWVCCFLLALLPLVGI. Over 561-580 the chain is Extracellular; sequence SSYAKVSICLPMDTETPLAL. A helical transmembrane segment spans residues 581–602; sequence AYIILVLLLNIVAFIIVCSCYV. Over 603–625 the chain is Cytoplasmic; that stretch reads KIYITVRNPQYNPGDKDTKIAKR. The chain crosses the membrane as a helical span at residues 626-649; that stretch reads MAVLIFTDFMCMAPISFYALSALM. The Extracellular segment spans residues 650–660; it reads NKPLITVTNSK. Residues 661 to 682 form a helical membrane-spanning segment; sequence ILLVLFYPLNSCANPFLYAIFT. At 683–764 the chain is on the cytoplasmic side; the sequence is KAFQRDVFIL…ISKEYNQTVL (82 aa). Residues 762–764 carry the PDZ-binding motif; sequence TVL.

It belongs to the G-protein coupled receptor 1 family. FSH/LSH/TSH subfamily. As to quaternary structure, interacts with heterodimer GPHA2:GPHB5; this interaction stimulates cAMP production. Interacts (via the PDZ-binding motif) with SCRIB; regulates TSHR trafficking and function. Post-translationally, glycosylated. In terms of processing, sulfated. Sulfation on Tyr-385 plays a role in thyrotropin receptor binding and activation.

It localises to the cell membrane. The protein resides in the basolateral cell membrane. Receptor for the thyroid-stimulating hormone (TSH) or thyrotropin. Also acts as a receptor for the heterodimeric glycoprotein hormone (GPHA2:GPHB5) or thyrostimulin. The activity of this receptor is mediated by G proteins which activate adenylate cyclase. Plays a central role in controlling thyroid cell metabolism. This chain is Thyrotropin receptor (TSHR), found in Canis lupus familiaris (Dog).